Consider the following 326-residue polypeptide: Lipoyl synthase (326 aa).

The [4Fe-4S] cluster site is built by Cys-74, Cys-79, Cys-85, Cys-100, Cys-104, Cys-107, and Ser-314. A Radical SAM core domain is found at 85-303 (CFGKGTATFM…EEEAYKMGFT (219 aa)).

It belongs to the radical SAM superfamily. Lipoyl synthase family. The cofactor is [4Fe-4S] cluster.

It localises to the cytoplasm. The catalysed reaction is [[Fe-S] cluster scaffold protein carrying a second [4Fe-4S](2+) cluster] + N(6)-octanoyl-L-lysyl-[protein] + 2 oxidized [2Fe-2S]-[ferredoxin] + 2 S-adenosyl-L-methionine + 4 H(+) = [[Fe-S] cluster scaffold protein] + N(6)-[(R)-dihydrolipoyl]-L-lysyl-[protein] + 4 Fe(3+) + 2 hydrogen sulfide + 2 5'-deoxyadenosine + 2 L-methionine + 2 reduced [2Fe-2S]-[ferredoxin]. It functions in the pathway protein modification; protein lipoylation via endogenous pathway; protein N(6)-(lipoyl)lysine from octanoyl-[acyl-carrier-protein]: step 2/2. Catalyzes the radical-mediated insertion of two sulfur atoms into the C-6 and C-8 positions of the octanoyl moiety bound to the lipoyl domains of lipoate-dependent enzymes, thereby converting the octanoylated domains into lipoylated derivatives. The polypeptide is Lipoyl synthase (Delftia acidovorans (strain DSM 14801 / SPH-1)).